Consider the following 416-residue polypeptide: Exodeoxyribonuclease 7 large subunit (416 aa).

The protein belongs to the XseA family. Heterooligomer composed of large and small subunits.

The protein localises to the cytoplasm. It catalyses the reaction Exonucleolytic cleavage in either 5'- to 3'- or 3'- to 5'-direction to yield nucleoside 5'-phosphates.. Its function is as follows. Bidirectionally degrades single-stranded DNA into large acid-insoluble oligonucleotides, which are then degraded further into small acid-soluble oligonucleotides. This Acidothermus cellulolyticus (strain ATCC 43068 / DSM 8971 / 11B) protein is Exodeoxyribonuclease 7 large subunit.